The primary structure comprises 490 residues: Scarecrow-like transcription factor PAT1 (490 aa).

The GRAS domain maps to 110–490 (TLEAISRRDL…RDLVASCAWK (381 aa)). Residues 117 to 178 (RDLRADLVSC…AQLASSGSSI (62 aa)) form a leucine repeat I (LRI) region. Residues 197–262 (MHILYEVCPY…GGPPRIRITG (66 aa)) form a VHIID region. The short motif at 228–232 (VHIID) is the VHIID element. Residues 278–310 (IVGNRLAKLAKQFNVPFEFNSVSVSVSEVKPKN) form a leucine repeat II (LRII) region. The interval 319-413 (LAVNFAFVLH…QHCLARDVVN (95 aa)) is PFYRE. The SAW stretch occupies residues 416–490 (ACEGADRVER…RDLVASCAWK (75 aa)).

Belongs to the GRAS family.

Its subcellular location is the cytoplasm. Its function is as follows. Probable transcription factor involved in phytochrome A (phyA) signal transduction. The chain is Scarecrow-like transcription factor PAT1 (PAT1) from Arabidopsis thaliana (Mouse-ear cress).